The chain runs to 522 residues: 2-isopropylmalate synthase (522 aa).

Residues 5 to 267 (VIIFDTTLRD…ETGINAKEIH (263 aa)) enclose the Pyruvate carboxyltransferase domain. Positions 14, 202, 204, and 238 each coordinate Mn(2+). The regulatory domain stretch occupies residues 392–522 (QLRQLVVQSD…MHKNRELGGV (131 aa)).

The protein belongs to the alpha-IPM synthase/homocitrate synthase family. LeuA type 1 subfamily. In terms of assembly, homodimer. It depends on Mn(2+) as a cofactor.

The protein localises to the cytoplasm. The enzyme catalyses 3-methyl-2-oxobutanoate + acetyl-CoA + H2O = (2S)-2-isopropylmalate + CoA + H(+). It participates in amino-acid biosynthesis; L-leucine biosynthesis; L-leucine from 3-methyl-2-oxobutanoate: step 1/4. Catalyzes the condensation of the acetyl group of acetyl-CoA with 3-methyl-2-oxobutanoate (2-ketoisovalerate) to form 3-carboxy-3-hydroxy-4-methylpentanoate (2-isopropylmalate). This chain is 2-isopropylmalate synthase, found in Shewanella oneidensis (strain ATCC 700550 / JCM 31522 / CIP 106686 / LMG 19005 / NCIMB 14063 / MR-1).